The primary structure comprises 76 residues: Protein sprouty homolog 1 (76 aa).

In terms of domain architecture, SPR spans Asn-1–Cys-52.

The protein belongs to the sprouty family. Brain and interlimb region.

The protein localises to the cytoplasm. Its subcellular location is the membrane. Functionally, inhibits fibroblast growth factor (FGF)-induced retinal lens fiber differentiation. Inhibits TGFB-induced epithelial-to-mesenchymal transition in lens epithelial cells. This is Protein sprouty homolog 1 (SPRY1) from Gallus gallus (Chicken).